Consider the following 439-residue polypeptide: MDQLANHFKSHIAELNHRVAEIISRENLSGLVIHSGQPHRQFLDDMDYPFKVNPHFKAWLPILDNPHCWLLVNGRDKPQLIFYRPVDFWHKVADLPDAFWAEHVEIKLLTKADKVAELLPSDISQWAYIGEHLDVAEVLGFKTRNPDAVMSYLHYHRASKTQYELCCLRNANEIAVKGHLAAKNAFFNGGSEFEIQQEYLTATNQGENEVPYGNIVALNENAAILHYTKLESVRPESRHSFLIDAGANFFGYASDITRTYAFEKNIFSELIEAMDKMQQEIISMMRPGVKYVDLHIATHQKLAKILVDFDIASGEPQSLVDQGITNVFFPHGLGHMLGLQVHDMGGFLHDERGTHIAAPDAHPFLRCTRTLAANQVLTIEPGIYIIDSLLNELKQDSRKKQVNWQTVDLLRPFGGIRIEDNVIVHADQNENMTRDCGLN.

5 residues coordinate Mn(2+): D244, D255, H335, E380, and E419.

This sequence belongs to the peptidase M24B family. Bacterial-type prolidase subfamily. Mn(2+) serves as cofactor.

The catalysed reaction is Xaa-L-Pro dipeptide + H2O = an L-alpha-amino acid + L-proline. Splits dipeptides with a prolyl residue in the C-terminal position. This Shewanella woodyi (strain ATCC 51908 / MS32) protein is Xaa-Pro dipeptidase.